Reading from the N-terminus, the 293-residue chain is Probable mediator of RNA polymerase II transcription subunit 15b (293 aa).

Belongs to the plant Mediator complex subunit 15 family. As to quaternary structure, component of the Mediator complex.

Its subcellular location is the nucleus. Its function is as follows. Component of the Mediator complex, a coactivator involved in the regulated transcription of nearly all RNA polymerase II-dependent genes. Mediator functions as a bridge to convey information from gene-specific regulatory proteins to the basal RNA polymerase II transcription machinery. The Mediator complex, having a compact conformation in its free form, is recruited to promoters by direct interactions with regulatory proteins and serves for the assembly of a functional preinitiation complex with RNA polymerase II and the general transcription factors. The polypeptide is Probable mediator of RNA polymerase II transcription subunit 15b (MED15B) (Arabidopsis thaliana (Mouse-ear cress)).